Consider the following 367-residue polypeptide: GDSL esterase/lipase 3 (367 aa).

An N-terminal signal peptide occupies residues 1–23; sequence MVRLVLIIFFVYTIILSIGSINC. S42 (nucleophile) is an active-site residue. N-linked (GlcNAc...) asparagine glycans are attached at residues N175, N194, and N321. Catalysis depends on residues D329 and H332. N351 is a glycosylation site (N-linked (GlcNAc...) asparagine).

Belongs to the 'GDSL' lipolytic enzyme family.

The protein localises to the secreted. This chain is GDSL esterase/lipase 3 (GLIP3), found in Arabidopsis thaliana (Mouse-ear cress).